Consider the following 207-residue polypeptide: Large ribosomal subunit protein uL4 (207 aa).

A disordered region spans residues 49–78; it reads HAVKNRSAVSGGGRKPWRQKGTGRARQGSI.

This sequence belongs to the universal ribosomal protein uL4 family. Part of the 50S ribosomal subunit.

Functionally, one of the primary rRNA binding proteins, this protein initially binds near the 5'-end of the 23S rRNA. It is important during the early stages of 50S assembly. It makes multiple contacts with different domains of the 23S rRNA in the assembled 50S subunit and ribosome. Its function is as follows. Forms part of the polypeptide exit tunnel. This is Large ribosomal subunit protein uL4 from Streptococcus sanguinis (strain SK36).